We begin with the raw amino-acid sequence, 546 residues long: DDB1- and CUL4-associated factor 11 (546 aa).

A compositionally biased stretch (low complexity) spans 1–19; it reads MGSRNSSSAGSGSGDPSEG. A disordered region spans residues 1 to 40; the sequence is MGSRNSSSAGSGSGDPSEGLPRRGAGLRRSEEEEEEDEDV. Phosphoserine occurs at positions 49 and 75. WD repeat units follow at residues 170 to 210, 216 to 258, 263 to 302, 305 to 345, 353 to 392, 435 to 480, and 481 to 520; these read SYSQ…RKFK, DVGW…TALD, ERRFAVFSIAVSSDGREVLGGANDGCLYVFDREQNRRTLQ, SHED…EDDP, GHQDGITFIDSKGDARYLISNSKDQTIKLWDIRRFSSREG, GVLH…KKLT, and NHKACVRDVSWHPFEEKIVSSSWDGNLRLWQYRQAEYFQD. Residues 523–546 form a disordered region; sequence PESEECASAPAPVPQSSTPFSSPQ. A compositionally biased stretch (polar residues) spans 536–546; the sequence is PQSSTPFSSPQ.

As to quaternary structure, interacts with DDB1 and CUL4A.

It participates in protein modification; protein ubiquitination. May function as a substrate receptor for CUL4-DDB1 E3 ubiquitin-protein ligase complex. This chain is DDB1- and CUL4-associated factor 11 (DCAF11), found in Homo sapiens (Human).